The primary structure comprises 600 residues: Tripeptidyl-peptidase 1 (600 aa).

A signal peptide spans 1–22; it reads MNIKFNLIIIILFILFISNVNC. Positions 23 to 220 are cleaved as a propeptide — removed in mature form; sequence KKIKNKKHLT…GGGGKVNGIG (198 aa). 3 N-linked (GlcNAc...) asparagine glycosylation sites follow: Asn91, Asn259, and Asn266. Residues 248-600 enclose the Peptidase S53 domain; it reads YLSPDLIRKE…FDELVKYCLE (353 aa). Residues Glu318 and Asp322 each act as charge relay system in the active site. A disulfide bridge connects residues Cys411 and Cys570. N-linked (GlcNAc...) asparagine glycosylation is found at Asn475 and Asn483. Ser514 serves as the catalytic Charge relay system. Residues Asp559, Ile560, Gly579, and Asp581 each coordinate Ca(2+).

In terms of assembly, monomer. It depends on Ca(2+) as a cofactor. Activated by autocatalytic proteolytical processing upon acidification. N-glycosylation is required for processing and activity.

It is found in the secreted. It carries out the reaction Release of an N-terminal tripeptide from a polypeptide, but also has endopeptidase activity.. Its function is as follows. Serine protease with tripeptidyl-peptidase I activity. This Dictyostelium discoideum (Social amoeba) protein is Tripeptidyl-peptidase 1 (tpp1).